The primary structure comprises 123 residues: Small ribosomal subunit protein uS12 (123 aa).

The disordered stretch occupies residues 1–24 (MPTINQLVRKGRTPQKVKSKVPAM). Basic residues predominate over residues 9–19 (RKGRTPQKVKS). Aspartate 89 is modified (3-methylthioaspartic acid).

This sequence belongs to the universal ribosomal protein uS12 family. In terms of assembly, part of the 30S ribosomal subunit. Contacts proteins S8 and S17. May interact with IF1 in the 30S initiation complex.

In terms of biological role, with S4 and S5 plays an important role in translational accuracy. Functionally, interacts with and stabilizes bases of the 16S rRNA that are involved in tRNA selection in the A site and with the mRNA backbone. Located at the interface of the 30S and 50S subunits, it traverses the body of the 30S subunit contacting proteins on the other side and probably holding the rRNA structure together. The combined cluster of proteins S8, S12 and S17 appears to hold together the shoulder and platform of the 30S subunit. The polypeptide is Small ribosomal subunit protein uS12 (Sphingopyxis alaskensis (strain DSM 13593 / LMG 18877 / RB2256) (Sphingomonas alaskensis)).